A 441-amino-acid polypeptide reads, in one-letter code: Velvet complex subunit B (441 aa).

Polar residues-rich tracts occupy residues 1-14 and 60-75; these read MNPGYSSTASQPGH and MMQQPQDQPAPSSTTE. Residues 1-104 are disordered; sequence MNPGYSSTAS…QPHVGEQDGR (104 aa). The Velvet domain maps to 100 to 426; sequence EQDGRKYRLD…AGQGIKIPIR (327 aa).

This sequence belongs to the velvet family. VelB subfamily. In terms of assembly, component of the heterotrimeric velvet complex composed of LAEA, VEA and VELB; VEA acting as a bridging protein between LAEA and VELB. Forms a heterodimeric complex with VOSA; the formation of the VELB-VOSA complex is light-dependent.

The protein localises to the nucleus. Its subcellular location is the cytoplasm. Functionally, component of the velvet transcription factor complex that controls sexual/asexual developmental ratio in response to light, promoting sexual development in the darkness while stimulating asexual sporulation under illumination. The velvet complex acts as a global regulator for secondary metabolite gene expression. Component of the VELB-VOSA heterodimeric complex that plays a dual role in activating genes associated with spore maturation and repressing certain development-associated genes. The VELB-VOSA complex binds DNA through the DNA-binding domain of VOSA that recognizes an 11-nucleotide consensus sequence 5'-CTGGCCGCGGC-3' consisting of two motifs in the promoters of key developmental regulatory genes. Involved in the regulation of the response to eactive oxygen species (ROS) stress. In Pyricularia oryzae (strain 70-15 / ATCC MYA-4617 / FGSC 8958) (Rice blast fungus), this protein is Velvet complex subunit B.